The chain runs to 357 residues: Alanine racemase (357 aa).

K33 acts as the Proton acceptor; specific for D-alanine in catalysis. Position 33 is an N6-(pyridoxal phosphate)lysine (K33). R129 contacts substrate. Residue Y253 is the Proton acceptor; specific for L-alanine of the active site. M301 lines the substrate pocket.

This sequence belongs to the alanine racemase family. Pyridoxal 5'-phosphate is required as a cofactor.

It catalyses the reaction L-alanine = D-alanine. Its pathway is amino-acid biosynthesis; D-alanine biosynthesis; D-alanine from L-alanine: step 1/1. Catalyzes the interconversion of L-alanine and D-alanine. May also act on other amino acids. The protein is Alanine racemase (alr) of Pseudomonas syringae pv. syringae (strain B728a).